A 223-amino-acid chain; its full sequence is Cytidylate kinase (223 aa).

Position 12-20 (12-20 (GPSGVGKGT)) interacts with ATP.

The protein belongs to the cytidylate kinase family. Type 1 subfamily.

It is found in the cytoplasm. It carries out the reaction CMP + ATP = CDP + ADP. It catalyses the reaction dCMP + ATP = dCDP + ADP. The polypeptide is Cytidylate kinase (Xylella fastidiosa (strain 9a5c)).